The following is an 85-amino-acid chain: Large ribosomal subunit protein bL27 (85 aa).

Positions 1-21 (MAHKKGGGTTRNGRDSESKRL) are disordered.

Belongs to the bacterial ribosomal protein bL27 family.

The chain is Large ribosomal subunit protein bL27 from Janthinobacterium sp. (strain Marseille) (Minibacterium massiliensis).